Reading from the N-terminus, the 162-residue chain is uncharacterized protein (162 aa).

Residues Leu7–Phe27 traverse the membrane as a helical segment.

It localises to the membrane. This is an uncharacterized protein from Methanocaldococcus jannaschii (strain ATCC 43067 / DSM 2661 / JAL-1 / JCM 10045 / NBRC 100440) (Methanococcus jannaschii).